Here is a 321-residue protein sequence, read N- to C-terminus: 4-hydroxy-2-oxoglutarate aldolase, mitochondrial (321 aa).

The transit peptide at 1–23 directs the protein to the mitochondrion; that stretch reads MLGPQIWASMRQGLSRGLSRNVK. A substrate-binding site is contributed by 71–72; that stretch reads ST. The active-site Schiff-base intermediate with substrate is Lys-190. Residues Ser-192 and Gly-216 each coordinate substrate.

It belongs to the DapA family. As to quaternary structure, homotetramer.

It is found in the mitochondrion. It catalyses the reaction (4S)-4-hydroxy-2-oxoglutarate = glyoxylate + pyruvate. It carries out the reaction (4R)-4-hydroxy-2-oxoglutarate = glyoxylate + pyruvate. Its activity is regulated as follows. Inhibited by divalent cations. In terms of biological role, catalyzes the final step in the metabolic pathway of hydroxyproline. This chain is 4-hydroxy-2-oxoglutarate aldolase, mitochondrial (Hoga1), found in Mus musculus (Mouse).